The following is a 78-amino-acid chain: HssA/B-like protein 29 (78 aa).

A disordered region spans residues 1-31 (MTLFSSITSISKTNTSSKSSLNSFSGSSLSM).

This sequence belongs to the hssA/B family.

The sequence is that of HssA/B-like protein 29 (hssl29) from Dictyostelium discoideum (Social amoeba).